Here is a 436-residue protein sequence, read N- to C-terminus: Exodeoxyribonuclease 7 large subunit (436 aa).

Residues 412-436 (PGGVMNKNSNTTDSTDNTENGTGEA) form a disordered region. The segment covering 417 to 436 (NKNSNTTDSTDNTENGTGEA) has biased composition (low complexity).

Belongs to the XseA family. As to quaternary structure, heterooligomer composed of large and small subunits.

It is found in the cytoplasm. The catalysed reaction is Exonucleolytic cleavage in either 5'- to 3'- or 3'- to 5'-direction to yield nucleoside 5'-phosphates.. Functionally, bidirectionally degrades single-stranded DNA into large acid-insoluble oligonucleotides, which are then degraded further into small acid-soluble oligonucleotides. This is Exodeoxyribonuclease 7 large subunit from Corynebacterium jeikeium (strain K411).